Here is a 490-residue protein sequence, read N- to C-terminus: Cytochrome P450 2C14 (490 aa).

Cys-435 contributes to the heme binding site.

It belongs to the cytochrome P450 family. It depends on heme as a cofactor.

The protein resides in the endoplasmic reticulum membrane. The protein localises to the microsome membrane. The enzyme catalyses an organic molecule + reduced [NADPH--hemoprotein reductase] + O2 = an alcohol + oxidized [NADPH--hemoprotein reductase] + H2O + H(+). Cytochromes P450 are a group of heme-thiolate monooxygenases. In liver microsomes, this enzyme is involved in an NADPH-dependent electron transport pathway. It oxidizes a variety of structurally unrelated compounds, including steroids, fatty acids, and xenobiotics. The polypeptide is Cytochrome P450 2C14 (CYP2C14) (Oryctolagus cuniculus (Rabbit)).